Here is a 130-residue protein sequence, read N- to C-terminus: Small ribosomal subunit protein uS8 (130 aa).

The protein belongs to the universal ribosomal protein uS8 family. Part of the 30S ribosomal subunit. Contacts proteins S5 and S12.

Its function is as follows. One of the primary rRNA binding proteins, it binds directly to 16S rRNA central domain where it helps coordinate assembly of the platform of the 30S subunit. The chain is Small ribosomal subunit protein uS8 from Sodalis glossinidius (strain morsitans).